The chain runs to 292 residues: GTP cyclohydrolase FolE2 (292 aa).

This sequence belongs to the GTP cyclohydrolase IV family.

It catalyses the reaction GTP + H2O = 7,8-dihydroneopterin 3'-triphosphate + formate + H(+). The protein operates within cofactor biosynthesis; 7,8-dihydroneopterin triphosphate biosynthesis; 7,8-dihydroneopterin triphosphate from GTP: step 1/1. In terms of biological role, converts GTP to 7,8-dihydroneopterin triphosphate. The sequence is that of GTP cyclohydrolase FolE2 from Staphylococcus haemolyticus (strain JCSC1435).